Reading from the N-terminus, the 440-residue chain is Histidinol dehydrogenase (440 aa).

Tyr-136, Gln-197, and Asn-220 together coordinate NAD(+). Positions 243, 265, and 268 each coordinate substrate. Zn(2+)-binding residues include Gln-265 and His-268. Active-site proton acceptor residues include Glu-333 and His-334. His-334, Asp-367, Glu-421, and His-426 together coordinate substrate. A Zn(2+)-binding site is contributed by Asp-367. His-426 contacts Zn(2+).

This sequence belongs to the histidinol dehydrogenase family. Requires Zn(2+) as cofactor.

The enzyme catalyses L-histidinol + 2 NAD(+) + H2O = L-histidine + 2 NADH + 3 H(+). It functions in the pathway amino-acid biosynthesis; L-histidine biosynthesis; L-histidine from 5-phospho-alpha-D-ribose 1-diphosphate: step 9/9. Functionally, catalyzes the sequential NAD-dependent oxidations of L-histidinol to L-histidinaldehyde and then to L-histidine. The sequence is that of Histidinol dehydrogenase from Pseudomonas aeruginosa (strain ATCC 15692 / DSM 22644 / CIP 104116 / JCM 14847 / LMG 12228 / 1C / PRS 101 / PAO1).